We begin with the raw amino-acid sequence, 473 residues long: Proline--tRNA ligase (473 aa).

It belongs to the class-II aminoacyl-tRNA synthetase family. ProS type 3 subfamily. Homodimer.

The protein resides in the cytoplasm. It catalyses the reaction tRNA(Pro) + L-proline + ATP = L-prolyl-tRNA(Pro) + AMP + diphosphate. In terms of biological role, catalyzes the attachment of proline to tRNA(Pro) in a two-step reaction: proline is first activated by ATP to form Pro-AMP and then transferred to the acceptor end of tRNA(Pro). This chain is Proline--tRNA ligase, found in Mesoplasma florum (strain ATCC 33453 / NBRC 100688 / NCTC 11704 / L1) (Acholeplasma florum).